A 147-amino-acid chain; its full sequence is D-aminoacyl-tRNA deacylase (147 aa).

The Gly-cisPro motif, important for rejection of L-amino acids motif lies at Gly137–Pro138.

Belongs to the DTD family. As to quaternary structure, homodimer.

The protein localises to the cytoplasm. The enzyme catalyses glycyl-tRNA(Ala) + H2O = tRNA(Ala) + glycine + H(+). The catalysed reaction is a D-aminoacyl-tRNA + H2O = a tRNA + a D-alpha-amino acid + H(+). Its function is as follows. An aminoacyl-tRNA editing enzyme that deacylates mischarged D-aminoacyl-tRNAs. Also deacylates mischarged glycyl-tRNA(Ala), protecting cells against glycine mischarging by AlaRS. Acts via tRNA-based rather than protein-based catalysis; rejects L-amino acids rather than detecting D-amino acids in the active site. By recycling D-aminoacyl-tRNA to D-amino acids and free tRNA molecules, this enzyme counteracts the toxicity associated with the formation of D-aminoacyl-tRNA entities in vivo and helps enforce protein L-homochirality. Upon expression in B.subtilis strain 168 confers resistance to D-Tyr and D-Asp, suggesting it acts on both of these amino acids. This Bacillus amyloliquefaciens (Bacillus velezensis) protein is D-aminoacyl-tRNA deacylase.